A 271-amino-acid polypeptide reads, in one-letter code: Putative pyruvate, phosphate dikinase regulatory protein 1 (271 aa).

G156 to T163 contributes to the ADP binding site.

It belongs to the pyruvate, phosphate/water dikinase regulatory protein family. PDRP subfamily.

It carries out the reaction N(tele)-phospho-L-histidyl/L-threonyl-[pyruvate, phosphate dikinase] + ADP = N(tele)-phospho-L-histidyl/O-phospho-L-threonyl-[pyruvate, phosphate dikinase] + AMP + H(+). The catalysed reaction is N(tele)-phospho-L-histidyl/O-phospho-L-threonyl-[pyruvate, phosphate dikinase] + phosphate + H(+) = N(tele)-phospho-L-histidyl/L-threonyl-[pyruvate, phosphate dikinase] + diphosphate. In terms of biological role, bifunctional serine/threonine kinase and phosphorylase involved in the regulation of the pyruvate, phosphate dikinase (PPDK) by catalyzing its phosphorylation/dephosphorylation. This chain is Putative pyruvate, phosphate dikinase regulatory protein 1, found in Staphylococcus saprophyticus subsp. saprophyticus (strain ATCC 15305 / DSM 20229 / NCIMB 8711 / NCTC 7292 / S-41).